The sequence spans 245 residues: MASVILFPAIDLKDGLAVRLEQGDMARATVFNRDPAAQAAEFETLGFRYLHLVDLDGAFAGKPVNAAAVERILETVSIPVQLGGGIRDLKTVEAWLEKGVTRVILGTAAVRDPDFVKQAAKAHPGRIVVGLDARDGRVAVEGWAETSDIAAVDIAKRFEDAGVTAIIYTDIARDGLLKGLNLDATVALAEAVNLPVIASGGLASLADIEALLTPRAKKLEGAITGRALYDGRLDAREALALVAGR.

Aspartate 11 functions as the Proton acceptor in the catalytic mechanism. Aspartate 132 functions as the Proton donor in the catalytic mechanism.

The protein belongs to the HisA/HisF family.

The protein localises to the cytoplasm. The enzyme catalyses 1-(5-phospho-beta-D-ribosyl)-5-[(5-phospho-beta-D-ribosylamino)methylideneamino]imidazole-4-carboxamide = 5-[(5-phospho-1-deoxy-D-ribulos-1-ylimino)methylamino]-1-(5-phospho-beta-D-ribosyl)imidazole-4-carboxamide. The protein operates within amino-acid biosynthesis; L-histidine biosynthesis; L-histidine from 5-phospho-alpha-D-ribose 1-diphosphate: step 4/9. The sequence is that of 1-(5-phosphoribosyl)-5-[(5-phosphoribosylamino)methylideneamino] imidazole-4-carboxamide isomerase from Xanthobacter autotrophicus (strain ATCC BAA-1158 / Py2).